Here is a 283-residue protein sequence, read N- to C-terminus: Orotidine 5'-phosphate decarboxylase (283 aa).

The active-site Proton donor is the Lys97.

This sequence belongs to the OMP decarboxylase family. Type 2 subfamily.

The catalysed reaction is orotidine 5'-phosphate + H(+) = UMP + CO2. It functions in the pathway pyrimidine metabolism; UMP biosynthesis via de novo pathway; UMP from orotate: step 2/2. This chain is Orotidine 5'-phosphate decarboxylase, found in Clostridium botulinum (strain Loch Maree / Type A3).